The sequence spans 158 residues: CD-NTase/cGAS isopeptidase (158 aa).

Glutamate 38 (proton donor/acceptor) is an active-site residue. Residues histidine 100, histidine 102, and aspartate 113 each contribute to the Zn(2+) site.

Belongs to the peptidase M67B family. Cap3 isopeptidase subfamily.

In terms of biological role, metalloprotease priming reversal component of a CBASS antivirus system. CBASS (cyclic oligonucleotide-based antiphage signaling system) provides immunity against bacteriophages. The CD-NTase protein synthesizes cyclic nucleotides in response to infection; these serve as specific second messenger signals. The signals activate a diverse range of effectors, leading to bacterial cell death and thus abortive phage infection. A type II-A(GA) CBASS system. Reverses the primed state of CdnA, the CD-NTase. Functionally, the capV-cdnA-cap2-cap3 operon provides about 10(4)-fold protection in strain BWHPSA011 against infection by phage PaMx41. In P.aeruginosa strain PAO1 it confers protection against phages PaMx41 and JBD18 but not JBD67 (JBD18 and JBD67 do not replicate in BWHPSA011 / Pa011). When acb2 in JBD67 is deleted this CBASS operon then protects against JDB67 also. This CBASS system limits prophage induction of lysogenized JBD67 as well as viral lytic replication. The chain is CD-NTase/cGAS isopeptidase from Pseudomonas aeruginosa (strain BWHPSA011 / Pa011).